The chain runs to 350 residues: Protein-glutamate methylesterase/protein-glutamine glutaminase 2 (350 aa).

In terms of domain architecture, Response regulatory spans 3-121 (RVLLVDDSPV…DPDYEEAVSE (119 aa)). The residue at position 54 (Asp-54) is a 4-aspartylphosphate. Positions 158-322 (IHQDIRVIVI…SFVYGMPGAA (165 aa)) constitute a CheB-type methylesterase domain. Active-site residues include Ser-170, His-197, and Asp-290.

The protein belongs to the CheB family. Post-translationally, phosphorylated by CheA. Phosphorylation of the N-terminal regulatory domain activates the methylesterase activity.

It is found in the cytoplasm. The catalysed reaction is [protein]-L-glutamate 5-O-methyl ester + H2O = L-glutamyl-[protein] + methanol + H(+). The enzyme catalyses L-glutaminyl-[protein] + H2O = L-glutamyl-[protein] + NH4(+). Its function is as follows. Involved in chemotaxis. Part of a chemotaxis signal transduction system that modulates chemotaxis in response to various stimuli. Catalyzes the demethylation of specific methylglutamate residues introduced into the chemoreceptors (methyl-accepting chemotaxis proteins or MCP) by CheR. Also mediates the irreversible deamidation of specific glutamine residues to glutamic acid. The sequence is that of Protein-glutamate methylesterase/protein-glutamine glutaminase 2 from Methanospirillum hungatei JF-1 (strain ATCC 27890 / DSM 864 / NBRC 100397 / JF-1).